Consider the following 424-residue polypeptide: Probable biofilm formation methyltransferase WspC (424 aa).

Residues 1 to 263 (MNEQRFFRFL…IAQSFAYVRH (263 aa)) form the CheR-type methyltransferase domain. Residues Thr68, Arg72, Glu109, Asp133, 187–188 (NV), and 206–207 (RN) contribute to the S-adenosyl-L-methionine site. One copy of the TPR repeat lies at 355 to 388 (AQVYYWLGLLSDTEGDAQQALSHYRKALYLEPQH).

In terms of assembly, monomer. The TPR repeat does not mediate self-association.

Its function is as follows. Involved in biofilm formation. This Pseudomonas putida (strain ATCC 47054 / DSM 6125 / CFBP 8728 / NCIMB 11950 / KT2440) protein is Probable biofilm formation methyltransferase WspC (wspC).